We begin with the raw amino-acid sequence, 382 residues long: p21-activated protein kinase-interacting protein 1 (382 aa).

WD repeat units lie at residues 37–77 (THHS…EHGA), 80–120 (HHAG…KTFK), 122–160 (HRGH…SAFI), 202–240 (TNGK…CLCE), and 243–284 (AHEN…KVPP). The interval 313 to 382 (LPPAAEPCPD…MSEKKRKKKM (70 aa)) is disordered. Positions 352 to 363 (DSKQPTKGNSPV) are enriched in polar residues. The segment covering 365-382 (AKKRKMATMSEKKRKKKM) has biased composition (basic residues).

As to quaternary structure, interacts with PAK1.

It localises to the nucleus. The protein localises to the nucleolus. Negatively regulates the PAK1 kinase. PAK1 is a member of the PAK kinase family, which has been shown to play a positive role in the regulation of signaling pathways involving MAPK8 and RELA. PAK1 exists as an inactive homodimer, which is activated by binding of small GTPases such as CDC42 to an N-terminal regulatory domain. PAK1IP1 also binds to the N-terminus of PAK1, and inhibits the specific activation of PAK1 by CDC42. May be involved in ribosomal large subunit assembly. This Mus musculus (Mouse) protein is p21-activated protein kinase-interacting protein 1 (Pak1ip1).